Reading from the N-terminus, the 871-residue chain is Alanine--tRNA ligase (871 aa).

Residues histidine 561, histidine 565, cysteine 665, and histidine 669 each coordinate Zn(2+).

This sequence belongs to the class-II aminoacyl-tRNA synthetase family. Requires Zn(2+) as cofactor.

It is found in the cytoplasm. The enzyme catalyses tRNA(Ala) + L-alanine + ATP = L-alanyl-tRNA(Ala) + AMP + diphosphate. In terms of biological role, catalyzes the attachment of alanine to tRNA(Ala) in a two-step reaction: alanine is first activated by ATP to form Ala-AMP and then transferred to the acceptor end of tRNA(Ala). Also edits incorrectly charged Ser-tRNA(Ala) and Gly-tRNA(Ala) via its editing domain. This Dehalococcoides mccartyi (strain ATCC BAA-2100 / JCM 16839 / KCTC 5957 / BAV1) protein is Alanine--tRNA ligase.